A 310-amino-acid polypeptide reads, in one-letter code: L-lactate dehydrogenase (310 aa).

3 residues coordinate NAD(+): valine 11, aspartate 32, and arginine 37. Substrate contacts are provided by residues glutamine 79, arginine 85, and 117-120 (NPVD). Residues 115–117 (VTN) and threonine 140 contribute to the NAD(+) site. 145-148 (DTAR) contributes to the substrate binding site. The beta-D-fructose 1,6-bisphosphate site is built by arginine 150 and histidine 165. The active-site Proton acceptor is the histidine 172. Position 221 is a phosphotyrosine (tyrosine 221). Threonine 230 contributes to the substrate binding site.

This sequence belongs to the LDH/MDH superfamily. LDH family. As to quaternary structure, homotetramer.

Its subcellular location is the cytoplasm. The catalysed reaction is (S)-lactate + NAD(+) = pyruvate + NADH + H(+). It functions in the pathway fermentation; pyruvate fermentation to lactate; (S)-lactate from pyruvate: step 1/1. Allosterically activated by fructose 1,6-bisphosphate (FBP). Functionally, catalyzes the conversion of lactate to pyruvate. In Fervidobacterium nodosum (strain ATCC 35602 / DSM 5306 / Rt17-B1), this protein is L-lactate dehydrogenase.